The primary structure comprises 391 residues: Sister chromatid cohesion protein DCC1 (391 aa).

This sequence belongs to the DCC1 family. In terms of assembly, component of the ctf18-RFC complex which consists of ctf18, ctf8, dscc1 and the RFC complex.

The protein resides in the nucleus. In terms of biological role, loads pcna onto primed templates regulating velocity, spacing and restart activity of replication forks. May couple DNA replication to sister chromatid cohesion. This chain is Sister chromatid cohesion protein DCC1 (dscc1), found in Xenopus tropicalis (Western clawed frog).